A 449-amino-acid polypeptide reads, in one-letter code: Adenylosuccinate synthetase (449 aa).

GTP contacts are provided by residues 12–18 (GDEGKGK) and 40–42 (GHT). Catalysis depends on Asp13, which acts as the Proton acceptor. 2 residues coordinate Mg(2+): Asp13 and Gly40. IMP contacts are provided by residues 13 to 16 (DEGK), 38 to 41 (NAGH), Thr128, Arg142, Gln223, Thr238, and Arg302. His41 (proton donor) is an active-site residue. 298–304 (TTTGRQR) serves as a coordination point for substrate. GTP contacts are provided by residues Arg304, 330-332 (KLD), and 412-414 (SLG).

Belongs to the adenylosuccinate synthetase family. Homodimer. Mg(2+) is required as a cofactor.

The protein localises to the cytoplasm. The catalysed reaction is IMP + L-aspartate + GTP = N(6)-(1,2-dicarboxyethyl)-AMP + GDP + phosphate + 2 H(+). The protein operates within purine metabolism; AMP biosynthesis via de novo pathway; AMP from IMP: step 1/2. Plays an important role in the de novo pathway of purine nucleotide biosynthesis. Catalyzes the first committed step in the biosynthesis of AMP from IMP. The polypeptide is Adenylosuccinate synthetase (Synechococcus sp. (strain JA-2-3B'a(2-13)) (Cyanobacteria bacterium Yellowstone B-Prime)).